We begin with the raw amino-acid sequence, 127 residues long: Large ribosomal subunit protein bL21 (127 aa).

This sequence belongs to the bacterial ribosomal protein bL21 family. As to quaternary structure, part of the 50S ribosomal subunit. Contacts protein L20.

Its function is as follows. This protein binds to 23S rRNA in the presence of protein L20. This is Large ribosomal subunit protein bL21 from Synechococcus elongatus (strain ATCC 33912 / PCC 7942 / FACHB-805) (Anacystis nidulans R2).